Here is a 613-residue protein sequence, read N- to C-terminus: Ribosome-associated molecular chaperone SSB1 (613 aa).

The interval 1 to 391 (MAEGVFSGAI…ILTGSNLSDD (391 aa)) is nucleotide binding domain (NBD). Residues 16 to 18 (TTY), K73, 205 to 207 (GGT), 271 to 278 (ERAKRTLS), and G342 each bind ATP. Residues 392 to 402 (TKDLLLLDVAP) are inter-domain linker. A substrate binding domain (SBD) region spans residues 403–613 (LSLGVAMQGD…RVVTKAMATR (211 aa)). Residues 516-612 (SEDIEKMVSQ…KRVVTKAMAT (97 aa)) form a lid domain (SBDalpha) region. Residues 574 to 582 (VEAALADAF) carry the Nuclear export signal motif.

It belongs to the heat shock protein 70 family. Ssb-type Hsp70 subfamily. In terms of assembly, binds to ribosomes. Binds close to the ribosomal tunnel exit via contacts with both ribosomal proteins and rRNA. Directly interacts with nascent polypeptides. This interaction is dependent on the ribosome-associated complex (RAC). Interacts with SSE1. Interacts with FES1.

It is found in the cytoplasm. It catalyses the reaction ATP + H2O = ADP + phosphate + H(+). Functionally, ribosome-bound, Hsp70-type chaperone that assists in the cotranslational folding of newly synthesized proteins in the cytosol. Stimulates folding by interacting with nascent chains, binding to short, largely hydrophobic sequences exposed by unfolded proteins, thereby stabilizing longer, more slowly translated, and aggregation-prone nascent polypeptides and domains that cannot fold stably until fully synthesized. The Hsp70-protein substrate interaction depends on ATP-binding and on allosteric regulation between the NBD and the SBD. The ATP-bound state is characterized by a fast exchange rate of substrate (low affinity state), while in the ADP-bound state exchange is much slower (high affinity state). During the Hsp70 cycle, the chaperone switches between the ATP-bound state (open conformation) and the ADP-bound state (closed conformation) by major conformational rearrangements involving mainly the lid domain. Ssb cooperates with a specific Hsp40/Hsp70 co-chaperone termed the ribosome-associated complex (RAC), which stimulates the ATPase activity of the ribosome-associated pool of Ssbs and switches it to the high affinity substrate binding state. Hsp110 chaperone SSE1 and FES1 act as nucleotide exchange factors that cause substrate release. The protein is Ribosome-associated molecular chaperone SSB1 (SSB1) of Eremothecium gossypii (strain ATCC 10895 / CBS 109.51 / FGSC 9923 / NRRL Y-1056) (Yeast).